The sequence spans 388 residues: Dual-specificity RNA methyltransferase RlmN (388 aa).

Residue Glu-109 is the Proton acceptor of the active site. One can recognise a Radical SAM core domain in the interval Glu-115–Asp-354. Cys-122 and Cys-359 are oxidised to a cystine. [4Fe-4S] cluster is bound by residues Cys-129, Cys-133, and Cys-136. S-adenosyl-L-methionine is bound by residues Gly-183–Glu-184, Ser-215, Ser-237–His-239, and Asn-316. Catalysis depends on Cys-359, which acts as the S-methylcysteine intermediate.

Belongs to the radical SAM superfamily. RlmN family. [4Fe-4S] cluster is required as a cofactor.

The protein resides in the cytoplasm. It carries out the reaction adenosine(2503) in 23S rRNA + 2 reduced [2Fe-2S]-[ferredoxin] + 2 S-adenosyl-L-methionine = 2-methyladenosine(2503) in 23S rRNA + 5'-deoxyadenosine + L-methionine + 2 oxidized [2Fe-2S]-[ferredoxin] + S-adenosyl-L-homocysteine. The enzyme catalyses adenosine(37) in tRNA + 2 reduced [2Fe-2S]-[ferredoxin] + 2 S-adenosyl-L-methionine = 2-methyladenosine(37) in tRNA + 5'-deoxyadenosine + L-methionine + 2 oxidized [2Fe-2S]-[ferredoxin] + S-adenosyl-L-homocysteine. Its function is as follows. Specifically methylates position 2 of adenine 2503 in 23S rRNA and position 2 of adenine 37 in tRNAs. m2A2503 modification seems to play a crucial role in the proofreading step occurring at the peptidyl transferase center and thus would serve to optimize ribosomal fidelity. This Salmonella typhimurium (strain LT2 / SGSC1412 / ATCC 700720) protein is Dual-specificity RNA methyltransferase RlmN.